The chain runs to 426 residues: Glutamate-1-semialdehyde 2,1-aminomutase (426 aa).

At lysine 265 the chain carries N6-(pyridoxal phosphate)lysine.

This sequence belongs to the class-III pyridoxal-phosphate-dependent aminotransferase family. HemL subfamily. In terms of assembly, homodimer. The cofactor is pyridoxal 5'-phosphate.

The protein resides in the cytoplasm. The catalysed reaction is (S)-4-amino-5-oxopentanoate = 5-aminolevulinate. The protein operates within porphyrin-containing compound metabolism; protoporphyrin-IX biosynthesis; 5-aminolevulinate from L-glutamyl-tRNA(Glu): step 2/2. This is Glutamate-1-semialdehyde 2,1-aminomutase from Erwinia tasmaniensis (strain DSM 17950 / CFBP 7177 / CIP 109463 / NCPPB 4357 / Et1/99).